A 315-amino-acid polypeptide reads, in one-letter code: tRNA dimethylallyltransferase (315 aa).

Position 11–18 (11–18 (GPTASGKS)) interacts with ATP. 13-18 (TASGKS) contributes to the substrate binding site. Interaction with substrate tRNA regions lie at residues 36 to 39 (DSMQ) and 160 to 164 (QRLIR).

Belongs to the IPP transferase family. In terms of assembly, monomer. It depends on Mg(2+) as a cofactor.

The catalysed reaction is adenosine(37) in tRNA + dimethylallyl diphosphate = N(6)-dimethylallyladenosine(37) in tRNA + diphosphate. In terms of biological role, catalyzes the transfer of a dimethylallyl group onto the adenine at position 37 in tRNAs that read codons beginning with uridine, leading to the formation of N6-(dimethylallyl)adenosine (i(6)A). This chain is tRNA dimethylallyltransferase, found in Rickettsia bellii (strain RML369-C).